The primary structure comprises 448 residues: MNMLAPAAKNAFTPASPDRPAYQSGFGNEFATEALPGALPHGQNSPQQAPYGLYAEQLSGTAFTAPRAHNRRAWLYRIRPAAVHLPFEPIAQDRFHSDFHAVPASPNQLRWDPLPAPAAGTDFIDGIVTFAGNGGPDAQTGCGIHLYAANASMTGRFFYNADGELLIVPQQGRLRLLTELGVLDVEPLEIAVIPRGVRFRVELPDGEARGYLCENFGAIFRLPDLGVIGSNGLANPRDFLTPHAWYEDREGDFELVAKFHGNLWRARIGHSPLDVVAWHGNYAPYKYDLRLFNTIGSISYDHPDPSIFLVLQSVSDTPGVDAIDFVIFPPRWLAMEHSFRPPWFHRNIASEFMGLIQGVYDAKAEGFVPGGASLHNCMTGHGPDAETFEKASHADTTQPHKVEATMAFMFETRGVIRPTRFAAESAQLQARYFECWQGLKKHFDPAKR.

The disordered stretch occupies residues 1–26; that stretch reads MNMLAPAAKNAFTPASPDRPAYQSGF. His-302 functions as the Proton acceptor in the catalytic mechanism. Residues His-345 and Glu-351 each contribute to the Fe cation site. Homogentisate-binding residues include Tyr-360 and His-381. Fe cation is bound at residue His-381.

This sequence belongs to the homogentisate dioxygenase family. As to quaternary structure, hexamer; dimer of trimers. Fe cation serves as cofactor.

The catalysed reaction is homogentisate + O2 = 4-maleylacetoacetate + H(+). The protein operates within amino-acid degradation; L-phenylalanine degradation; acetoacetate and fumarate from L-phenylalanine: step 4/6. Functionally, involved in the catabolism of homogentisate (2,5-dihydroxyphenylacetate or 2,5-OH-PhAc), a central intermediate in the degradation of phenylalanine and tyrosine. Catalyzes the oxidative ring cleavage of the aromatic ring of homogentisate to yield maleylacetoacetate. The chain is Homogentisate 1,2-dioxygenase from Ralstonia nicotianae (strain ATCC BAA-1114 / GMI1000) (Ralstonia solanacearum).